The following is a 327-amino-acid chain: Ribonucleoside-diphosphate reductase small chain (327 aa).

Positions 70, 101, and 104 each coordinate Fe cation. The active site involves Tyr-108. Glu-164, Glu-198, and His-201 together coordinate Fe cation.

It belongs to the ribonucleoside diphosphate reductase small chain family. In terms of assembly, heterotetramer composed of a homodimer of the large subunit (R1) and a homodimer of the small subunit (R2). Larger multisubunit protein complex are also active, composed of (R1)n(R2)n. Fe cation serves as cofactor.

The enzyme catalyses a 2'-deoxyribonucleoside 5'-diphosphate + [thioredoxin]-disulfide + H2O = a ribonucleoside 5'-diphosphate + [thioredoxin]-dithiol. In terms of biological role, ribonucleoside-diphosphate reductase holoenzyme provides the precursors necessary for viral DNA synthesis. Allows virus growth in non-dividing cells. Catalyzes the biosynthesis of deoxyribonucleotides from the corresponding ribonucleotides. This chain is Ribonucleoside-diphosphate reductase small chain, found in African swine fever virus (isolate Tick/South Africa/Pretoriuskop Pr4/1996) (ASFV).